The chain runs to 637 residues: Neuroendocrine convertase 2 (637 aa).

Residues 1-24 (MEGGCGSQWKAAGFLFCVMVFASA) form the signal peptide. Positions 25 to 108 (ERPVFTNHFL…QQEGFDRKKR (84 aa)) are excised as a propeptide. Residues 128–452 (QWYLFNTGQA…YGVLDAGAMV (325 aa)) enclose the Peptidase S8 domain. Active-site charge relay system residues include Asp-166 and His-207. Disulfide bonds link Cys-224-Cys-375 and Cys-316-Cys-346. Asn-374 is a glycosylation site (N-linked (GlcNAc...) asparagine). Catalysis depends on Ser-383, which acts as the Charge relay system. A P/Homo B domain is found at 460–596 (TVPERFHCVG…TLMLHGTQSA (137 aa)). Residues Cys-467 and Cys-493 are joined by a disulfide bond. Residues Asn-513 and Asn-523 are each glycosylated (N-linked (GlcNAc...) asparagine).

The protein belongs to the peptidase S8 family. Furin subfamily.

Its subcellular location is the cytoplasmic vesicle. The protein localises to the secretory vesicle. It is found in the secreted. It catalyses the reaction Release of protein hormones and neuropeptides from their precursors, generally by hydrolysis of -Lys-Arg-|- bonds.. Functionally, serine endopeptidase which is involved in the processing of hormone and other protein precursors at sites comprised of pairs of basic amino acid residues. Responsible for the release of glucagon from proglucagon in pancreatic A cells. The sequence is that of Neuroendocrine convertase 2 (Pcsk2) from Mus musculus (Mouse).